A 162-amino-acid polypeptide reads, in one-letter code: Cytochrome c-type biogenesis protein CcmE (162 aa).

Residues 1–8 (MNPRRKKR) are Cytoplasmic-facing. The helical; Signal-anchor for type II membrane protein transmembrane segment at 9 to 29 (LTLAVALIGGVAAIASLLLYA) threads the bilayer. The Periplasmic segment spans residues 30–162 (LNSNLNLFYT…YSQQKAPDTK (133 aa)). Histidine 131 and tyrosine 135 together coordinate heme. The tract at residues 139–162 (EVAEAMGQKHEKLDYSQQKAPDTK) is disordered. The segment covering 153–162 (YSQQKAPDTK) has biased composition (polar residues).

Belongs to the CcmE/CycJ family.

It is found in the cell inner membrane. Functionally, heme chaperone required for the biogenesis of c-type cytochromes. Transiently binds heme delivered by CcmC and transfers the heme to apo-cytochromes in a process facilitated by CcmF and CcmH. This chain is Cytochrome c-type biogenesis protein CcmE, found in Shewanella putrefaciens (strain CN-32 / ATCC BAA-453).